The chain runs to 246 residues: MTHSNRMLLGVNIDHVATLRQARGTRYPDPVKAALDAEEAGADGITVHLREDRRHIQERDVVLLKDVLQTRMNFEMGVTEEMMAFAEKIRPAHICLVPETRQELTTEGGLDVAGQEARIKAAVERLSRTGAEVSLFIDADERQIEASRRVGAPAIELHTGRYADAQTPTEVAEELKRIVDGVAFGVAQGLIVNAGHGLHYHNVEAVAAIKGINELNIGHALVAHALFVGFKAAVAEMKALIVAASR.

Asn-12 lines the 3-amino-2-oxopropyl phosphate pocket. Position 14–15 (14–15 (DH)) interacts with 1-deoxy-D-xylulose 5-phosphate. Residue Arg-23 coordinates 3-amino-2-oxopropyl phosphate. The active-site Proton acceptor is the His-48. Residues Arg-50 and His-55 each contribute to the 1-deoxy-D-xylulose 5-phosphate site. The active-site Proton acceptor is the Glu-75. Thr-105 contributes to the 1-deoxy-D-xylulose 5-phosphate binding site. The Proton donor role is filled by His-196. Residues Gly-197 and 218 to 219 (GH) contribute to the 3-amino-2-oxopropyl phosphate site.

Belongs to the PNP synthase family. In terms of assembly, homooctamer; tetramer of dimers.

Its subcellular location is the cytoplasm. It catalyses the reaction 3-amino-2-oxopropyl phosphate + 1-deoxy-D-xylulose 5-phosphate = pyridoxine 5'-phosphate + phosphate + 2 H2O + H(+). It functions in the pathway cofactor biosynthesis; pyridoxine 5'-phosphate biosynthesis; pyridoxine 5'-phosphate from D-erythrose 4-phosphate: step 5/5. Catalyzes the complicated ring closure reaction between the two acyclic compounds 1-deoxy-D-xylulose-5-phosphate (DXP) and 3-amino-2-oxopropyl phosphate (1-amino-acetone-3-phosphate or AAP) to form pyridoxine 5'-phosphate (PNP) and inorganic phosphate. In Pseudomonas putida (strain W619), this protein is Pyridoxine 5'-phosphate synthase.